The chain runs to 637 residues: Limonene synthase, chloroplastic (637 aa).

Residues 1–56 (MALLSIVSLQVPKSCGLKSLISSSNVQKALCISTAVPTLRMRRRQKALVINMKLTT) constitute a chloroplast transit peptide. Positions 388, 392, and 540 each coordinate Mg(2+). The short motif at 388 to 392 (DDIYD) is the DDXXD motif element.

This sequence belongs to the terpene synthase family. Tpsd subfamily. It depends on Mg(2+) as a cofactor. The cofactor is Mn(2+). K(+) is required as a cofactor.

The protein localises to the plastid. The protein resides in the chloroplast. The enzyme catalyses (2E)-geranyl diphosphate = (4S)-limonene + diphosphate. It participates in terpene metabolism; oleoresin biosynthesis. Functionally, involved in defensive oleoresin formation in conifers in response to insect attack or other injury. Involved in monoterpene (C10) olefins biosynthesis. This chain is Limonene synthase, chloroplastic (ag10), found in Abies grandis (Grand fir).